The primary structure comprises 415 residues: Serine hydroxymethyltransferase (415 aa).

(6S)-5,6,7,8-tetrahydrofolate is bound by residues Leu-119 and Gly-123–Leu-125. Lys-228 carries the N6-(pyridoxal phosphate)lysine modification. (6S)-5,6,7,8-tetrahydrofolate is bound at residue Ser-353–Phe-355.

It belongs to the SHMT family. In terms of assembly, homodimer. Pyridoxal 5'-phosphate serves as cofactor.

It is found in the cytoplasm. The enzyme catalyses (6R)-5,10-methylene-5,6,7,8-tetrahydrofolate + glycine + H2O = (6S)-5,6,7,8-tetrahydrofolate + L-serine. It functions in the pathway one-carbon metabolism; tetrahydrofolate interconversion. The protein operates within amino-acid biosynthesis; glycine biosynthesis; glycine from L-serine: step 1/1. Catalyzes the reversible interconversion of serine and glycine with tetrahydrofolate (THF) serving as the one-carbon carrier. Also exhibits THF-independent aldolase activity toward beta-hydroxyamino acids, producing glycine and aldehydes, via a retro-aldol mechanism. This is Serine hydroxymethyltransferase from Halobacterium salinarum (strain ATCC 29341 / DSM 671 / R1).